The sequence spans 62 residues: Large ribosomal subunit protein bL32 (62 aa).

Over residues Met-1–Arg-16 the composition is skewed to basic residues. Residues Met-1–Leu-44 are disordered. Positions Val-28–Leu-44 are enriched in basic and acidic residues.

This sequence belongs to the bacterial ribosomal protein bL32 family.

The sequence is that of Large ribosomal subunit protein bL32 from Methylorubrum extorquens (strain CM4 / NCIMB 13688) (Methylobacterium extorquens).